A 323-amino-acid polypeptide reads, in one-letter code: tRNA U34 carboxymethyltransferase (323 aa).

Residues K91, W105, K110, G130, 152 to 154 (DPT), 181 to 182 (IE), M196, Y200, and R315 contribute to the carboxy-S-adenosyl-L-methionine site.

The protein belongs to the class I-like SAM-binding methyltransferase superfamily. CmoB family. As to quaternary structure, homotetramer.

The catalysed reaction is carboxy-S-adenosyl-L-methionine + 5-hydroxyuridine(34) in tRNA = 5-carboxymethoxyuridine(34) in tRNA + S-adenosyl-L-homocysteine + H(+). Its function is as follows. Catalyzes carboxymethyl transfer from carboxy-S-adenosyl-L-methionine (Cx-SAM) to 5-hydroxyuridine (ho5U) to form 5-carboxymethoxyuridine (cmo5U) at position 34 in tRNAs. This Salmonella enteritidis PT4 (strain P125109) protein is tRNA U34 carboxymethyltransferase.